Reading from the N-terminus, the 601-residue chain is DNA ligase (601 aa).

Position 258 (Asp-258) interacts with ATP. Lys-260 serves as the catalytic N6-AMP-lysine intermediate. ATP is bound by residues Arg-265, Arg-280, Glu-310, Phe-350, Arg-427, and Lys-433.

It belongs to the ATP-dependent DNA ligase family. Interacts with the PCNA heterotrimer, probably via subunit PCNA3. The cofactor is a divalent metal cation.

The enzyme catalyses ATP + (deoxyribonucleotide)n-3'-hydroxyl + 5'-phospho-(deoxyribonucleotide)m = (deoxyribonucleotide)n+m + AMP + diphosphate.. Its activity is regulated as follows. Ligase activity stimulated by PCNA heterotrimer. DNA ligase that seals nicks in double-stranded DNA during DNA replication, DNA recombination and DNA repair. Interaction with PCNA enhances ligase activity. DNA polymerase I, DNA ligase and the flap endonuclease may be constitutively associated with the PCNA heterotrimer forming a scanning complex able to couple DNA synthesis and Okazaki fragment maturation. This Saccharolobus solfataricus (strain ATCC 35092 / DSM 1617 / JCM 11322 / P2) (Sulfolobus solfataricus) protein is DNA ligase.